The following is a 456-amino-acid chain: Bifunctional protein GlmU (456 aa).

The interval 1 to 229 is pyrophosphorylase; it reads MLNSAMSVVI…LSEVEGVNNR (229 aa). Residues 11 to 14, Lys25, Gln76, 81 to 82, 103 to 105, Gly140, Glu154, Asn169, and Asn227 contribute to the UDP-N-acetyl-alpha-D-glucosamine site; these read LAAG, GT, and YGD. Asp105 lines the Mg(2+) pocket. Residue Asn227 participates in Mg(2+) binding. The tract at residues 230–250 is linker; it reads LQLSALERIYQREQADKLLLA. The N-acetyltransferase stretch occupies residues 251–456; that stretch reads GVMLLDPARF…SGWQRPVKKK (206 aa). The UDP-N-acetyl-alpha-D-glucosamine site is built by Arg333 and Lys351. His363 acts as the Proton acceptor in catalysis. UDP-N-acetyl-alpha-D-glucosamine is bound by residues Tyr366 and Asn377. Acetyl-CoA-binding positions include Ala380, 386–387, Ser405, Ala423, and Arg440; that span reads NY.

In the N-terminal section; belongs to the N-acetylglucosamine-1-phosphate uridyltransferase family. This sequence in the C-terminal section; belongs to the transferase hexapeptide repeat family. As to quaternary structure, homotrimer. Mg(2+) is required as a cofactor.

Its subcellular location is the cytoplasm. It carries out the reaction alpha-D-glucosamine 1-phosphate + acetyl-CoA = N-acetyl-alpha-D-glucosamine 1-phosphate + CoA + H(+). The enzyme catalyses N-acetyl-alpha-D-glucosamine 1-phosphate + UTP + H(+) = UDP-N-acetyl-alpha-D-glucosamine + diphosphate. It functions in the pathway nucleotide-sugar biosynthesis; UDP-N-acetyl-alpha-D-glucosamine biosynthesis; N-acetyl-alpha-D-glucosamine 1-phosphate from alpha-D-glucosamine 6-phosphate (route II): step 2/2. The protein operates within nucleotide-sugar biosynthesis; UDP-N-acetyl-alpha-D-glucosamine biosynthesis; UDP-N-acetyl-alpha-D-glucosamine from N-acetyl-alpha-D-glucosamine 1-phosphate: step 1/1. Its pathway is bacterial outer membrane biogenesis; LPS lipid A biosynthesis. Its function is as follows. Catalyzes the last two sequential reactions in the de novo biosynthetic pathway for UDP-N-acetylglucosamine (UDP-GlcNAc). The C-terminal domain catalyzes the transfer of acetyl group from acetyl coenzyme A to glucosamine-1-phosphate (GlcN-1-P) to produce N-acetylglucosamine-1-phosphate (GlcNAc-1-P), which is converted into UDP-GlcNAc by the transfer of uridine 5-monophosphate (from uridine 5-triphosphate), a reaction catalyzed by the N-terminal domain. The chain is Bifunctional protein GlmU from Pectobacterium atrosepticum (strain SCRI 1043 / ATCC BAA-672) (Erwinia carotovora subsp. atroseptica).